The primary structure comprises 217 residues: N-(5'-phosphoribosyl)anthranilate isomerase (217 aa).

Belongs to the TrpF family.

It catalyses the reaction N-(5-phospho-beta-D-ribosyl)anthranilate = 1-(2-carboxyphenylamino)-1-deoxy-D-ribulose 5-phosphate. It functions in the pathway amino-acid biosynthesis; L-tryptophan biosynthesis; L-tryptophan from chorismate: step 3/5. This Synechococcus sp. (strain ATCC 27144 / PCC 6301 / SAUG 1402/1) (Anacystis nidulans) protein is N-(5'-phosphoribosyl)anthranilate isomerase.